Reading from the N-terminus, the 822-residue chain is Myosin-D (822 aa).

Positions 95-770 (LTYGDIGGLP…AAKMLVRLQR (676 aa)) constitute a Myosin motor domain. Position 189 to 196 (189 to 196 (GESGAGKT)) interacts with ATP. The actin-binding stretch occupies residues 660 to 670 (SHFIRCIKPND). Residues 772–822 (ALSAWEPLVGVFEGMTVLKRAKQLSTGRAVPATRICANVRRKLVQAGIKVC) form a tail region.

The protein belongs to the TRAFAC class myosin-kinesin ATPase superfamily. Myosin family.

The protein resides in the cell membrane. It is found in the cytoplasm. Myosins are actin-based motor molecules with ATPase activity. Unconventional myosins serve in intracellular movements. Their highly divergent tails are presumed to bind to membranous compartments, which would be moved relative to actin filaments. This is Myosin-D from Toxoplasma gondii.